Reading from the N-terminus, the 416-residue chain is Lipid II:glycine glycyltransferase (416 aa).

Belongs to the FemABX family.

The protein resides in the cytoplasm. The catalysed reaction is beta-D-GlcNAc-(1-&gt;4)-Mur2Ac(oyl-L-Ala-D-isoglutaminyl-L-Lys-D-Ala-D-Ala)-di-trans,octa-cis-undecaprenyl diphosphate + glycyl-tRNA(Gly) = beta-D-GlcNAc-(1-&gt;4)-Mur2Ac(oyl-L-Ala-D-isoglutaminyl-L-Lys-(N(6)-Gly)-D-Ala-D-Ala)-di-trans,octa-cis-undecaprenyl diphosphate + tRNA(Gly) + H(+). Catalyzes the incorporation of amino acid(s) into the interchain peptide bridge of peptidoglycan, using aminoacyl-tRNA as amino acid donor. The chain is Lipid II:glycine glycyltransferase (femX) from Staphylococcus epidermidis (strain ATCC 35984 / DSM 28319 / BCRC 17069 / CCUG 31568 / BM 3577 / RP62A).